Here is a 520-residue protein sequence, read N- to C-terminus: Probable glycerol-3-phosphate acyltransferase 3 (520 aa).

Transmembrane regions (helical) follow at residues 5 to 20 (ISIFQALVFLFYRFIL), 64 to 84 (YFMLVAFEAGGVIRSFLLFIL), 88 to 108 (ISLMSHEMGVKVMVMVSFFGI), 264 to 284 (TLMNTLVLFMWGPFAAAAAAA), and 286 to 306 (LFVSLCIPYSLSIPILAFSGC). The short motif at 334–339 (HRTLLD) is the HXXXXD motif element.

It belongs to the GPAT/DAPAT family. In terms of tissue distribution, widely expressed at low level. Expressed at higher level in seedlings and leaves.

The protein localises to the membrane. It catalyses the reaction sn-glycerol 3-phosphate + an acyl-CoA = a 1-acyl-sn-glycero-3-phosphate + CoA. Its pathway is phospholipid metabolism; CDP-diacylglycerol biosynthesis; CDP-diacylglycerol from sn-glycerol 3-phosphate: step 1/3. Its function is as follows. Esterifies acyl-group from acyl-ACP to the sn-1 position of glycerol-3-phosphate, an essential step in glycerolipid biosynthesis. The polypeptide is Probable glycerol-3-phosphate acyltransferase 3 (GPAT3) (Arabidopsis thaliana (Mouse-ear cress)).